Reading from the N-terminus, the 352-residue chain is Ion-translocating oxidoreductase complex subunit D (352 aa).

5 consecutive transmembrane segments (helical) span residues 20 to 40, 42 to 62, 78 to 109, 123 to 143, and 148 to 168; these read IMLLVLLAAVPGIAAQLWFFG, GTLVQILLASVSALLAEALVL, ALLTGLLLAVSIPPLAPWWMVVLGTVFAVIIA, PAMIGYVVLLISFPVQMTSWL, and IAVNIPGFIDAIQVIFSGHTA. FMN phosphoryl threonine is present on threonine 187. 5 consecutive transmembrane segments (helical) span residues 214–234, 242–262, 267–287, 301–321, and 322–342; these read ILAGAGWQWVNLAWLAGGVWL, WHIPLSFLVTLTLCATLGWLF, LAAPQIHLLSGATMLGAFFIL, LIFGALAGLLVWLIRSFGGYP, and DGVAFAVLLANITVPLIDYYT.

This sequence belongs to the NqrB/RnfD family. The complex is composed of six subunits: RsxA, RsxB, RsxC, RsxD, RsxE and RsxG. FMN is required as a cofactor.

The protein localises to the cell inner membrane. Its function is as follows. Part of a membrane-bound complex that couples electron transfer with translocation of ions across the membrane. Required to maintain the reduced state of SoxR. This is Ion-translocating oxidoreductase complex subunit D from Escherichia coli O139:H28 (strain E24377A / ETEC).